The sequence spans 328 residues: Beta-ketoacyl-[acyl-carrier-protein] synthase III (328 aa).

Catalysis depends on residues cysteine 122 and histidine 255. Positions 256-260 are ACP-binding; that stretch reads QANVR. The active site involves asparagine 285.

It belongs to the thiolase-like superfamily. FabH family. As to quaternary structure, homodimer.

It is found in the cytoplasm. The enzyme catalyses malonyl-[ACP] + acetyl-CoA + H(+) = 3-oxobutanoyl-[ACP] + CO2 + CoA. It functions in the pathway lipid metabolism; fatty acid biosynthesis. In terms of biological role, catalyzes the condensation reaction of fatty acid synthesis by the addition to an acyl acceptor of two carbons from malonyl-ACP. Catalyzes the first condensation reaction which initiates fatty acid synthesis and may therefore play a role in governing the total rate of fatty acid production. Possesses both acetoacetyl-ACP synthase and acetyl transacylase activities. Its substrate specificity determines the biosynthesis of branched-chain and/or straight-chain of fatty acids. This Bordetella avium (strain 197N) protein is Beta-ketoacyl-[acyl-carrier-protein] synthase III.